Here is a 447-residue protein sequence, read N- to C-terminus: Nacrein (447 aa).

An N-terminal signal peptide occupies residues 1-17 (MYLHLTALCVVIPLCYG). A glycan (N-linked (GlcNAc...) asparagine) is linked at asparagine 44. In terms of domain architecture, Alpha-carbonic anhydrase spans 50 to 446 (AGFSYDRSIC…KNKVTVYKSF (397 aa)). Residues histidine 149, histidine 151, and histidine 174 each contribute to the Zn(2+) site. The interval 218 to 329 (DEPDDEECKH…GENGHKHGCR (112 aa)) is disordered. Basic and acidic residues predominate over residues 224–236 (ECKHILKGHHPDN). Positions 237–321 (NENGNGDNGN…NNGENGNNGE (85 aa)) are enriched in low complexity. 27 repeat units span residues 242–244 (GDN), 245–247 (GNN), 248–250 (GYN), 251–253 (GDN), 254–256 (GNN), 257–259 (GDN), 260–262 (GNN), 263–265 (SYN), 266–268 (GDN), 269–271 (GNN), 272–274 (GVN), 275–277 (GNN), 278–280 (GYN), 281–283 (GDN), 284–286 (GNN), 287–289 (GDN), 290–292 (GNN), 293–295 (GYN), 296–298 (GDN), 299–301 (GNN), 302–304 (GDN), 305–307 (GNN), 308–310 (GEN), 311–313 (GNN), 314–316 (GEN), 317–318 (GN), and 320–322 (GEN). The segment at 242-322 (GDNGNNGYNG…NGENGNNGEN (81 aa)) is 27 X 3 AA approximate tandem repeats of G-X-N. Asparagine 261 carries an N-linked (GlcNAc...) asparagine glycan. 387–388 (TT) provides a ligand contact to substrate.

Belongs to the alpha-carbonic anhydrase family. As to quaternary structure, homooligomer; disulfide-linked. May also be disulfide-linked to insoluble organic matrix. The cofactor is Zn(2+). In terms of processing, N-glycosylated. In terms of tissue distribution, expressed at whole regions of the mantle epithelium tissue. Is found in the aragonitic nacreous and calcitic prismatic and foliated layers.

Its subcellular location is the secreted. It is found in the extracellular space. It localises to the extracellular matrix. It carries out the reaction hydrogencarbonate + H(+) = CO2 + H2O. Acts as a negative regulator for calcification in the shells of mollusks. May function both as a calcium concentrator and as a carbonic anhydrase required for production of carbonate ions, which are assembled to CaCO(3) at mineralization sites. Is important for shell formation in both the calcitic prismatic layer and the aragonitic nacreous layer. In Pinctada fucata (Akoya pearl oyster), this protein is Nacrein.